Here is a 501-residue protein sequence, read N- to C-terminus: TNF receptor-associated factor 2 (501 aa).

A2 is modified (N-acetylalanine). S5 is subject to Phosphoserine. Residue T7 is modified to Phosphothreonine. The residue at position 11 (S11) is a Phosphoserine. T22 is subject to Phosphothreonine. K31 participates in a covalent cross-link: Glycyl lysine isopeptide (Lys-Gly) (interchain with G-Cter in ubiquitin). The segment at 34–73 adopts an RING-type zinc-finger fold; it reads CSACRNVLRRPFQAQCGHRYCSFCLASILSSGPQNCAACV. T117 carries the post-translational modification Phosphothreonine; by PKC. 2 consecutive TRAF-type zinc fingers follow at residues 124–180 and 177–233; these read CHEG…AHHE and AHHE…EKQQ. Residues 283-293 form an important for interaction with BIRC2 and BIRC3 region; that stretch reads ENIVCVLNREV. A coiled-coil region spans residues 299–348; that stretch reads TAEACSRQHRLDQDKIEALSSKVQQLERSIGLKDLAMADLEQKVLEMEAS. A Glycyl lysine isopeptide (Lys-Gly) (interchain with G-Cter in ubiquitin) cross-link involves residue K320. The MATH domain maps to 351 to 496; it reads DGVFIWKISD…DDAIFIKAIV (146 aa).

This sequence belongs to the TNF receptor-associated factor family. A subfamily. Homotrimer. Heterotrimer with TRAF1. Heterotrimer with TRAF3 (via TRAF domain). The domain containing the RING-type and the first TRAF-type zinc finger can also form homodimers (in vitro). Interacts with TNFRSF1B/TNFR2. Interacts with TNFRSF5/CD40. Interacts with TNFRSF4, TNFRSF7/CD27, TNFRSF8/CD30, TNFRSF9/CD137, TNFRSF11A/RANK, TNFRSF13B/TACI, TNFRSF14, TNFRSF16/NGFR, TNFRSF17/BCMA, TNFRSF18/AITR, TNFRSF19/TROY, TNFRSF19L/RELT and EDAR. Stimulation of TNF-alpha receptor TNFRSF1A leads to the formation of two distinct signaling complexes. Plasma membrane-bound complex I is composed of TNFRSF1A, TRADD, RIPK1, TRAF2 and BIRC2/c-IAP1 or BIRC3 which interacts with CHUCK/IKK-alpha, IKBKB/IKK-beta and IKBKG/IKK-gamma promoting cell survival. Subsequently, TRADD, RIPK1 and TRAF2 dissociate from TNFRSF1A and form cytoplasmic complex II with FADD and caspase CASP8 promoting cell apoptosis. Interacts with TRADD. Identified in a complex with TNFRSF1A, RIPK1 and IKBKB/IKK-beta. Interacts with RIPK2. Interacts with BIRC2 and BIRC3 N-terminus; a single BIRC2 or BIRC3 molecule interacts with a heterotrimer formed by TRAF1 and TRAF2, or a TRAF2 homotrimer. Identified in a complex composed of TRAF2, TRAF3, BIRC2 and BIRC3. Interacts with BIRC2; the interaction promotes BIRC2 stability. Interaction with BIRC2 and/or BIRC3 is essential for ubiquitination of IKBKE, degradation of NFKBIA and activation of NF-kappa-B. Within complex I, phosphorylated TRAF2 interacts (via 'Lys-63'-linked polyubiquitin chains) with CHUCK/IKK-alpha, IKBKB/IKK-beta, IKBKG/IKK-gamma TAB2, TAB3 and TAK1 in response to TNF-alpha stimulation. Within complex I, interacts with UXT isoform 1 (via TPQE motif); the interaction prevents the recruitment of FADD and CASP8/caspase 8 to complex I. Forms a complex composed of TNFRSF8/CD30 or TNFRSF1B/TNFR2, and TRAF1, TRAF2 and E3 ligase TRAIP. Within the complex, interacts with TRAIP; the interaction inhibits TRAF2-mediated NF-kappa B activation. Component of a complex composed of TANK and TBK1. Interacts with TRPC4AP. Interacts with MAP3K1/MEKK1, MAP3K5/ASK1 and MAP3K11/MLK3 in response to TNF-alpha stimulation; the interaction leads to JNK activation and interaction with MAP3K5 is inhibited by PRMT1. Component of a complex composed of MAP3K14/NIK BIRC3 and TRAF3; the interaction leads to BIRC2/3-mediated ubiquitination of TRAF3 upon CD40 engagement in a TRAF2-dependent manner. Interacts with MAP3K14/NIK in response to TNF-alpha stimulation; the interaction leads to NF-kappa B activation. Interacts with PEG3; the interaction may promote TRAF2-mediated NF-kappa B activation. Interacts with HIVEP3; the interaction may inhibit TNF-alpha-TRAF2-mediated NF-kappa B and JNK activation. Interacts with TANK/ITRAF; the interaction prevents interaction between TNFRSF1B/TNFR2 and TRAF2. Interacts with deubiquitinating enzyme CYLD; the interaction results in the deubiquitination and inactivation of TRAF2. Interacts with SIAH2; the interaction leads to TRAF2 ubiquitination and degradation. Interacts with E2 conjugating enzyme UBE2N/Ubc13, E3 ligase ITCH and RNF11 in response to TNF-alpha stimulation. Interacts with ubiquitin-editing enzyme TNFAIP3/A20 in response to TNF-alpha stimulation; the interaction promotes TRAF2 dissociation from UBE2N/Ubc13, ITCH, RNF11 and TAX1BP1 and prevents prolonged TRAF-2 ubiquitination. Interacts with TAX1BP1 in response to TNF-alpha stimulation; the interaction promotes TRAF2 dissociation from UBE2N/Ubc13 and TNFAIP3/A20, and prevents prolonged TRAF-2 ubiquitination. Interacts (via C-terminus) with EIF2AK2/PKR (via the kinase catalytic domain). Interacts with deubiquitinating enzyme USP48. Interacts with PTPN2; probably involved in TNF-mediated signaling. Interacts with Toll-like receptor TLR4/3 adapter TICAM1/TRIF; the interaction may promote TICAM1 ubiquitination. Interacts with kinase/endoribonuclease ERN1/IRE1 and DAB2IP in response to ER stress; the interaction requires DAB2IP. Interacts with ERN1/IRE1 and TAOK3 in response to ER stress; the interaction may promote TRAF2 phosphorylation. Interacts (via zinc fingers) with DAB2IP (via C-terminus PER domain)in response to TNF-alpha stimulation. Interacts with CASP8AP2/FLASH. Interacts with NFATC2IP; the interaction may repress IL-4 production in T cells. Interacts with kinase CDK9. Interacts with sphingosine kinase 1 SPHK1. Interacts with kinase TNIK. Interacts with TRAFD1. Interacts with DNA phosphodiesterase TDP2. Interacts with MAVS/IPS1. Interacts with CARD14. Interacts with Epstein-Barr virus LMP1/BNFL1. Interacts with GPS2. Interacts with XPNPEP3. Interacts with RIPK3. Interacts with RELL2. Interacts with LRRC19. Interacts with GAPDH; promoting TRAF2 ubiquitination. Phosphorylated at several serine residues within the first 128 amino acid residues. Phosphorylated at Thr-117 in response to signaling via TNF and TNFRSF1A. Phosphorylation at Thr-117 is required for 'Lys-63'-linked polyubiquitination, but not for 'Lys-48'-linked polyubiquitination. Phosphorylation at Thr-117 is important for interaction with IKKA and IKKB, activation of IKK and subsequent activation of NF-kappa-B. Post-translationally, undergoes both 'Lys-48'-linked and 'Lys-63'-linked polyubiquitination. Polyubiquitinated via 'Lys-63'-linked ubiquitin in response to TNF signaling; this requires prior phosphorylation at Thr-117. 'Lys-63'-linked polyubiquitination promotes TRAF2-mediated activation of NF-kappa-B. Can be polyubiquitinated at several Lys residues via 'Lys-48'-linked ubiquitin chains in response to TNF signaling, leading to proteasomal degradation. Autoubiquitinated, leading to its subsequent proteasomal degradation. Polyubiquitinated by BIRC2 and SIAH2, leading to its subsequent proteasomal degradation. Deubiquitinated by CYLD, a protease that specifically cleaves 'Lys-63'-linked polyubiquitin chains. Ubiquination is inhibited by LRRC19; inhibits proteasomal degradation. Ubiquitinated at Lys-320 by the SCF(FBXL2) complex, leading to its degradation by the proteasome. Ubiquitinated by E3 ubiquitin-protein ligase complex containing FBXO7; leading to repression of NF-kappa-B signaling.

It localises to the cytoplasm. It catalyses the reaction S-ubiquitinyl-[E2 ubiquitin-conjugating enzyme]-L-cysteine + [acceptor protein]-L-lysine = [E2 ubiquitin-conjugating enzyme]-L-cysteine + N(6)-ubiquitinyl-[acceptor protein]-L-lysine.. It functions in the pathway protein modification; protein ubiquitination. Has very low E3 ubiquitin ligase activity in the absence of sphingosine-1-phosphate. E3 ubiquitin ligase activity is strongly activated by cytoplasmic sphingosine-1-phosphate. Its function is as follows. E3 ubiquitin-protein ligase that regulates activation of NF-kappa-B and JNK and plays a central role in the regulation of cell survival and apoptosis. Catalyzes 'Lys-63'-linked ubiquitination of target proteins, such as BIRC3, IKBKE, MLST8, RIPK1 and TICAM1. Is an essential constituent of several E3 ubiquitin-protein ligase complexes, where it promotes the ubiquitination of target proteins by bringing them into contact with other E3 ubiquitin ligases. Regulates BIRC2 and BIRC3 protein levels by inhibiting their autoubiquitination and subsequent degradation; this does not depend on the TRAF2 RING-type zinc finger domain. Plays a role in mediating activation of NF-kappa-B by EIF2AK2/PKR. In complex with BIRC2 or BIRC3, promotes ubiquitination of IKBKE. Acts as a regulator of mTORC1 and mTORC2 assembly by mediating 'Lys-63'-linked ubiquitination of MLST8, thereby inhibiting formation of the mTORC2 complex, while facilitating assembly of the mTORC1 complex. Required for normal antibody isotype switching from IgM to IgG. The chain is TNF receptor-associated factor 2 from Homo sapiens (Human).